We begin with the raw amino-acid sequence, 95 residues long: Aspartyl/glutamyl-tRNA(Asn/Gln) amidotransferase subunit C (95 aa).

The protein belongs to the GatC family. In terms of assembly, heterotrimer of A, B and C subunits.

The catalysed reaction is L-glutamyl-tRNA(Gln) + L-glutamine + ATP + H2O = L-glutaminyl-tRNA(Gln) + L-glutamate + ADP + phosphate + H(+). It catalyses the reaction L-aspartyl-tRNA(Asn) + L-glutamine + ATP + H2O = L-asparaginyl-tRNA(Asn) + L-glutamate + ADP + phosphate + 2 H(+). Its function is as follows. Allows the formation of correctly charged Asn-tRNA(Asn) or Gln-tRNA(Gln) through the transamidation of misacylated Asp-tRNA(Asn) or Glu-tRNA(Gln) in organisms which lack either or both of asparaginyl-tRNA or glutaminyl-tRNA synthetases. The reaction takes place in the presence of glutamine and ATP through an activated phospho-Asp-tRNA(Asn) or phospho-Glu-tRNA(Gln). This is Aspartyl/glutamyl-tRNA(Asn/Gln) amidotransferase subunit C from Chlorobium phaeobacteroides (strain BS1).